The sequence spans 63 residues: Transmembrane protein ZNF593OS (63 aa).

A helical membrane pass occupies residues 30 to 50 (LAGVVATVLAVLGLGGSCYAV).

Its subcellular location is the membrane. This chain is Transmembrane protein ZNF593OS, found in Homo sapiens (Human).